We begin with the raw amino-acid sequence, 398 residues long: Riboflavin biosynthesis protein RibBA (398 aa).

A DHBP synthase region spans residues 1-199; it reads MFHPIEEALE…IKDLIEYRYN (199 aa). D-ribulose 5-phosphate-binding positions include 26–27, Asp-31, 138–142, and Glu-162; these read RE and RAGHT. Glu-27 contacts Mg(2+). His-141 provides a ligand contact to Mg(2+). The tract at residues 200 to 398 is GTP cyclohydrolase II; that stretch reads ITTLVNREVD…MKKLGHLLHF (199 aa). 251–255 is a binding site for GTP; the sequence is RVHSE. Cys-256, Cys-267, and Cys-269 together coordinate Zn(2+). GTP is bound by residues Gln-272, 294 to 296, and Thr-316; that span reads EGR. The Proton acceptor; for GTP cyclohydrolase activity role is filled by Asp-328. The active-site Nucleophile; for GTP cyclohydrolase activity is the Arg-330. Residues Thr-351 and Lys-356 each contribute to the GTP site.

It in the N-terminal section; belongs to the DHBP synthase family. The protein in the C-terminal section; belongs to the GTP cyclohydrolase II family. Mg(2+) is required as a cofactor. It depends on Mn(2+) as a cofactor. The cofactor is Zn(2+).

The catalysed reaction is D-ribulose 5-phosphate = (2S)-2-hydroxy-3-oxobutyl phosphate + formate + H(+). It carries out the reaction GTP + 4 H2O = 2,5-diamino-6-hydroxy-4-(5-phosphoribosylamino)-pyrimidine + formate + 2 phosphate + 3 H(+). The protein operates within cofactor biosynthesis; riboflavin biosynthesis; 2-hydroxy-3-oxobutyl phosphate from D-ribulose 5-phosphate: step 1/1. Its pathway is cofactor biosynthesis; riboflavin biosynthesis; 5-amino-6-(D-ribitylamino)uracil from GTP: step 1/4. Catalyzes the conversion of D-ribulose 5-phosphate to formate and 3,4-dihydroxy-2-butanone 4-phosphate. In terms of biological role, catalyzes the conversion of GTP to 2,5-diamino-6-ribosylamino-4(3H)-pyrimidinone 5'-phosphate (DARP), formate and pyrophosphate. The protein is Riboflavin biosynthesis protein RibBA of Bacillus velezensis (strain DSM 23117 / BGSC 10A6 / LMG 26770 / FZB42) (Bacillus amyloliquefaciens subsp. plantarum).